The primary structure comprises 91 residues: Large ribosomal subunit protein eL43 (91 aa).

Residues Cys39–Cys60 form a C4-type zinc finger.

The protein belongs to the eukaryotic ribosomal protein eL43 family.

This is Large ribosomal subunit protein eL43 (rpl37A) from Dictyostelium discoideum (Social amoeba).